Reading from the N-terminus, the 137-residue chain is Venom allergen 4 (137 aa).

The first 19 residues, 1-19 (MKTFVLVSCLLVFTQIIYA), serve as a signal peptide directing secretion.

This sequence belongs to the ant venom allergen 2/4 family. As to quaternary structure, monomer. As to expression, expressed by the venom gland.

Its subcellular location is the secreted. This Solenopsis invicta (Red imported fire ant) protein is Venom allergen 4.